The chain runs to 340 residues: Glycerol-3-phosphate dehydrogenase [NAD(P)+] (340 aa).

Ser12, Trp13, and Lys110 together coordinate NADPH. Sn-glycerol 3-phosphate is bound by residues Lys110, Gly141, and Ser143. NADPH is bound at residue Ala145. Sn-glycerol 3-phosphate is bound by residues Lys196, Asp249, Ser259, Arg260, and Asn261. Lys196 functions as the Proton acceptor in the catalytic mechanism. Arg260 provides a ligand contact to NADPH. NADPH-binding residues include Val284 and Glu286.

This sequence belongs to the NAD-dependent glycerol-3-phosphate dehydrogenase family.

It is found in the cytoplasm. The catalysed reaction is sn-glycerol 3-phosphate + NAD(+) = dihydroxyacetone phosphate + NADH + H(+). It catalyses the reaction sn-glycerol 3-phosphate + NADP(+) = dihydroxyacetone phosphate + NADPH + H(+). The protein operates within membrane lipid metabolism; glycerophospholipid metabolism. Catalyzes the reduction of the glycolytic intermediate dihydroxyacetone phosphate (DHAP) to sn-glycerol 3-phosphate (G3P), the key precursor for phospholipid synthesis. In Latilactobacillus sakei subsp. sakei (strain 23K) (Lactobacillus sakei subsp. sakei), this protein is Glycerol-3-phosphate dehydrogenase [NAD(P)+].